Here is a 238-residue protein sequence, read N- to C-terminus: Orotate phosphoribosyltransferase (238 aa).

Lys-29 serves as a coordination point for 5-phospho-alpha-D-ribose 1-diphosphate. Residue 37-38 (FF) coordinates orotate. Residues 87–88 (YK), Arg-118, Lys-119, Lys-122, His-124, and 144–152 (DDVITAGTA) contribute to the 5-phospho-alpha-D-ribose 1-diphosphate site. Residues Thr-148 and Arg-176 each coordinate orotate.

It belongs to the purine/pyrimidine phosphoribosyltransferase family. PyrE subfamily. Homodimer.

The enzyme catalyses orotidine 5'-phosphate + diphosphate = orotate + 5-phospho-alpha-D-ribose 1-diphosphate. It participates in pyrimidine metabolism; UMP biosynthesis via de novo pathway; UMP from orotate: step 1/2. In terms of biological role, catalyzes the transfer of a ribosyl phosphate group from 5-phosphoribose 1-diphosphate to orotate, leading to the formation of orotidine monophosphate (OMP). The protein is Orotate phosphoribosyltransferase (URA5) of Coccidioides immitis (strain RS) (Valley fever fungus).